Reading from the N-terminus, the 284-residue chain is Putative cysteine-rich repeat secretory protein 7 (284 aa).

The signal sequence occupies residues 1–24; sequence MARIILTAPLFYFFFSLLSHQTMS. 2 consecutive Gnk2-homologous domains span residues 26-128 and 134-244; these read PQHM…NVSF and SKPV…TFVL. Residues 247–284 form a disordered region; it reads PAPSPSSLPPISPTSSPPLSLPPQLPPPLSQPPPPLST.

It belongs to the cysteine-rich repeat secretory protein family.

It is found in the secreted. The polypeptide is Putative cysteine-rich repeat secretory protein 7 (CRRSP7) (Arabidopsis thaliana (Mouse-ear cress)).